We begin with the raw amino-acid sequence, 623 residues long: Sphingomyelinase C 2 (623 aa).

An N-terminal signal peptide occupies residues 1–25; that stretch reads MINKITKPKLLIGYYLLLFSLIRCL. 2 stretches are compositionally biased toward low complexity: residues 51–61 and 67–80; these read VNSVSINNDPA and NPAS…NAVP. Residues 51–121 are disordered; the sequence is VNSVSINNDP…DPNPANLASA (71 aa). Over residues 89–102 the composition is skewed to polar residues; it reads NPVNPASANSNQVN. A compositionally biased stretch (low complexity) spans 110 to 121; it reads PADPNPANLASA.

The protein resides in the secreted. The enzyme catalyses a sphingomyelin + H2O = phosphocholine + an N-acylsphing-4-enine + H(+). The polypeptide is Sphingomyelinase C 2 (sph2) (Leptospira interrogans serogroup Icterohaemorrhagiae serovar Lai (strain 56601)).